Consider the following 120-residue polypeptide: Large ribosomal subunit protein uL18 (120 aa).

Belongs to the universal ribosomal protein uL18 family. In terms of assembly, part of the 50S ribosomal subunit; part of the 5S rRNA/L5/L18/L25 subcomplex. Contacts the 5S and 23S rRNAs.

Functionally, this is one of the proteins that bind and probably mediate the attachment of the 5S RNA into the large ribosomal subunit, where it forms part of the central protuberance. The protein is Large ribosomal subunit protein uL18 of Synechococcus elongatus (strain ATCC 33912 / PCC 7942 / FACHB-805) (Anacystis nidulans R2).